The chain runs to 444 residues: 23S rRNA (uracil(1939)-C(5))-methyltransferase RlmD (444 aa).

A TRAM domain is found at 5–64; sequence KPKLNLTSQTARIVNLSHDGRGIARINGKATFIQGALPGEVVEFQYTRVKKDFDEGKLLS. [4Fe-4S] cluster contacts are provided by Cys77, Cys83, Cys86, and Cys166. S-adenosyl-L-methionine is bound by residues Gln276, Phe305, Asn310, Glu326, Asn353, and Asp374. The active-site Nucleophile is Cys400.

This sequence belongs to the class I-like SAM-binding methyltransferase superfamily. RNA M5U methyltransferase family. RlmD subfamily.

It carries out the reaction uridine(1939) in 23S rRNA + S-adenosyl-L-methionine = 5-methyluridine(1939) in 23S rRNA + S-adenosyl-L-homocysteine + H(+). Functionally, catalyzes the formation of 5-methyl-uridine at position 1939 (m5U1939) in 23S rRNA. The polypeptide is 23S rRNA (uracil(1939)-C(5))-methyltransferase RlmD (Legionella pneumophila (strain Lens)).